The primary structure comprises 297 residues: 33 kDa chaperonin (297 aa).

2 cysteine pairs are disulfide-bonded: Cys-232/Cys-234 and Cys-266/Cys-269.

The protein belongs to the HSP33 family. Post-translationally, under oxidizing conditions two disulfide bonds are formed involving the reactive cysteines. Under reducing conditions zinc is bound to the reactive cysteines and the protein is inactive.

It is found in the cytoplasm. Functionally, redox regulated molecular chaperone. Protects both thermally unfolding and oxidatively damaged proteins from irreversible aggregation. Plays an important role in the bacterial defense system toward oxidative stress. The chain is 33 kDa chaperonin from Pseudomonas aeruginosa (strain UCBPP-PA14).